The sequence spans 197 residues: Recombination protein RecR (197 aa).

The C4-type zinc finger occupies 56–71; sequence CVRCFSLTDAETCNFC. Residues 79–174 enclose the Toprim domain; sequence RVLCVVETFA…RVTRIAQGLP (96 aa).

Belongs to the RecR family.

Functionally, may play a role in DNA repair. It seems to be involved in an RecBC-independent recombinational process of DNA repair. It may act with RecF and RecO. The chain is Recombination protein RecR from Myxococcus xanthus (strain DK1622).